A 182-amino-acid polypeptide reads, in one-letter code: ATP-dependent protease subunit HslV (182 aa).

Thr12 is an active-site residue. Na(+)-binding residues include Ala167, Cys170, and Thr173.

Belongs to the peptidase T1B family. HslV subfamily. As to quaternary structure, a double ring-shaped homohexamer of HslV is capped on each side by a ring-shaped HslU homohexamer. The assembly of the HslU/HslV complex is dependent on binding of ATP.

The protein resides in the cytoplasm. The enzyme catalyses ATP-dependent cleavage of peptide bonds with broad specificity.. With respect to regulation, allosterically activated by HslU binding. Protease subunit of a proteasome-like degradation complex believed to be a general protein degrading machinery. This Pelodictyon phaeoclathratiforme (strain DSM 5477 / BU-1) protein is ATP-dependent protease subunit HslV.